We begin with the raw amino-acid sequence, 433 residues long: Probable D-serine dehydratase (433 aa).

Lys-110 is subject to N6-(pyridoxal phosphate)lysine.

This sequence belongs to the serine/threonine dehydratase family. DsdA subfamily. Requires pyridoxal 5'-phosphate as cofactor.

The catalysed reaction is D-serine = pyruvate + NH4(+). This is Probable D-serine dehydratase from Oenococcus oeni (strain ATCC BAA-331 / PSU-1).